The primary structure comprises 318 residues: Magnetosome protein MamM (318 aa).

Positions 1 to 210 (MRKSGCAVCS…FMDAYRGLMD (210 aa)) are transmembrane domain (TMD). 4 helical membrane-spanning segments follow: residues 13–33 (IGWV…FVGL), 39–59 (AMLA…MVII), 81–101 (FILS…LLVH), and 117–137 (LIVL…YFYS). The tract at residues 211–318 (HTAGEAVQNR…DEVMLSKVDN (108 aa)) is C-terminal domain (CTD). Positions 249, 264, 285, and 289 each coordinate Fe cation.

The protein belongs to the cation diffusion facilitator (CDF) transporter (TC 2.A.4) family. As to quaternary structure, forms homodimers via its C-terminal domain (CTD) in the presence of metal cations. Interacts with MamB via their CTD. Isolated CTD forms homodimers.

Its subcellular location is the magnetosome membrane. The protein localises to the cell inner membrane. Functionally, essential for magnetosome formation; required for stable accumulation of MamB. May nucleate iron crystal formation. Probably binds and transports iron. Binds divalent cations, possibly up to 3 Zn(2+) per dimer in vitro, probably iron in vivo. One of 7 genes (mamLQBIEMO) able to induce magnetosome membrane biogenesis; coexpression of mamLQRBIEMO in a deletion of the 17 gene mamAB operon restores magnetosome vesicle formation but not magnetite biosynthesis. In Magnetospirillum gryphiswaldense (strain DSM 6361 / JCM 21280 / NBRC 15271 / MSR-1), this protein is Magnetosome protein MamM.